The primary structure comprises 420 residues: Glucose-1-phosphate adenylyltransferase (420 aa).

Alpha-D-glucose 1-phosphate contacts are provided by residues Tyr-107, Gly-173, Glu-188–Lys-189, and Ser-206.

The protein belongs to the bacterial/plant glucose-1-phosphate adenylyltransferase family. As to quaternary structure, homotetramer.

It carries out the reaction alpha-D-glucose 1-phosphate + ATP + H(+) = ADP-alpha-D-glucose + diphosphate. It participates in glycan biosynthesis; glycogen biosynthesis. Functionally, involved in the biosynthesis of ADP-glucose, a building block required for the elongation reactions to produce glycogen. Catalyzes the reaction between ATP and alpha-D-glucose 1-phosphate (G1P) to produce pyrophosphate and ADP-Glc. The protein is Glucose-1-phosphate adenylyltransferase of Shewanella sp. (strain W3-18-1).